Reading from the N-terminus, the 159-residue chain is MTQPTRPSVTCDQGSSTIGGTAAQATTSSSATSGSNYQRDRLGRRPEIGVGGQPQICFPRPRSAQQPVLFSLMNSSEAAMKKTLPKSHLSRVIIHDNRITQRIYEMEVSALEKTKKKISHYYEHLKKKFMTEQLRKLGRWREESVNSNRYLTFGIPPPV.

The span at 1–13 shows a compositional bias: polar residues; it reads MTQPTRPSVTCDQ. The tract at residues 1-57 is disordered; it reads MTQPTRPSVTCDQGSSTIGGTAAQATTSSSATSGSNYQRDRLGRRPEIGVGGQPQIC. Positions 14–35 are enriched in low complexity; it reads GSSTIGGTAAQATTSSSATSGS. Over residues 38–47 the composition is skewed to basic and acidic residues; the sequence is QRDRLGRRPE.

This is an uncharacterized protein from Homo sapiens (Human).